A 399-amino-acid chain; its full sequence is CCA-adding enzyme (399 aa).

Positions 32 and 35 each coordinate ATP. Residues glycine 32 and arginine 35 each contribute to the CTP site. The Mg(2+) site is built by aspartate 45 and aspartate 47. Arginine 116, aspartate 159, arginine 162, arginine 165, and arginine 168 together coordinate ATP. The CTP site is built by arginine 116, aspartate 159, arginine 162, arginine 165, and arginine 168.

It belongs to the tRNA nucleotidyltransferase/poly(A) polymerase family. Bacterial CCA-adding enzyme type 3 subfamily. Homodimer. The cofactor is Mg(2+).

It catalyses the reaction a tRNA precursor + 2 CTP + ATP = a tRNA with a 3' CCA end + 3 diphosphate. The catalysed reaction is a tRNA with a 3' CCA end + 2 CTP + ATP = a tRNA with a 3' CCACCA end + 3 diphosphate. Catalyzes the addition and repair of the essential 3'-terminal CCA sequence in tRNAs without using a nucleic acid template. Adds these three nucleotides in the order of C, C, and A to the tRNA nucleotide-73, using CTP and ATP as substrates and producing inorganic pyrophosphate. tRNA 3'-terminal CCA addition is required both for tRNA processing and repair. Also involved in tRNA surveillance by mediating tandem CCA addition to generate a CCACCA at the 3' terminus of unstable tRNAs. While stable tRNAs receive only 3'-terminal CCA, unstable tRNAs are marked with CCACCA and rapidly degraded. This chain is CCA-adding enzyme, found in Streptococcus gordonii (strain Challis / ATCC 35105 / BCRC 15272 / CH1 / DL1 / V288).